Reading from the N-terminus, the 189-residue chain is Peptidyl-tRNA hydrolase (189 aa).

Tyr14 contributes to the tRNA binding site. His19 acts as the Proton acceptor in catalysis. Residues Tyr64, Asn66, and Asn112 each contribute to the tRNA site.

The protein belongs to the PTH family. In terms of assembly, monomer.

The protein localises to the cytoplasm. It catalyses the reaction an N-acyl-L-alpha-aminoacyl-tRNA + H2O = an N-acyl-L-amino acid + a tRNA + H(+). Hydrolyzes ribosome-free peptidyl-tRNAs (with 1 or more amino acids incorporated), which drop off the ribosome during protein synthesis, or as a result of ribosome stalling. In terms of biological role, catalyzes the release of premature peptidyl moieties from peptidyl-tRNA molecules trapped in stalled 50S ribosomal subunits, and thus maintains levels of free tRNAs and 50S ribosomes. The chain is Peptidyl-tRNA hydrolase from Clostridium botulinum (strain ATCC 19397 / Type A).